Reading from the N-terminus, the 240-residue chain is MFLEVETHCHTIASGHAYNNLEEMVLEAQKKGLKGICITDHGPEMPGSCSSLYFYNLIVVPRKINGIMVFRGCEANIVDYEGRIDIPEDALKRLDFVIASLHDVCIPSGTVSDHTRALIGAIKNPYIHCIGHPGNPLYEIDKEEVVLAAKEYKKAIEINNSSFYVREKSKENCIEILKLCKKYGVYIAMGSDAHYKADIGRCEITQKLVCEYEFPPELIVNKSLESFISFLKLHGKDIDI.

Zn(2+) is bound by residues His8, His10, His16, His41, Glu74, His102, His132, Asp192, and His194.

It belongs to the PHP family. Zn(2+) is required as a cofactor.

In Caldicellulosiruptor bescii (strain ATCC BAA-1888 / DSM 6725 / KCTC 15123 / Z-1320) (Anaerocellum thermophilum), this protein is Probable phosphatase Athe_0620.